Consider the following 195-residue polypeptide: 3-isopropylmalate dehydratase small subunit (195 aa).

Belongs to the LeuD family. LeuD type 1 subfamily. In terms of assembly, heterodimer of LeuC and LeuD.

The enzyme catalyses (2R,3S)-3-isopropylmalate = (2S)-2-isopropylmalate. It functions in the pathway amino-acid biosynthesis; L-leucine biosynthesis; L-leucine from 3-methyl-2-oxobutanoate: step 2/4. Functionally, catalyzes the isomerization between 2-isopropylmalate and 3-isopropylmalate, via the formation of 2-isopropylmaleate. The polypeptide is 3-isopropylmalate dehydratase small subunit (Thermobifida fusca (strain YX)).